Reading from the N-terminus, the 1179-residue chain is DNA-directed RNA polymerase subunit beta' (1179 aa).

Residues C60, C62, C75, and C78 each contribute to the Zn(2+) site. 3 residues coordinate Mg(2+): D450, D452, and D454. Zn(2+) contacts are provided by C791, C865, C872, and C875.

The protein belongs to the RNA polymerase beta' chain family. As to quaternary structure, the RNAP catalytic core consists of 2 alpha, 1 beta, 1 beta' and 1 omega subunit. When a sigma factor is associated with the core the holoenzyme is formed, which can initiate transcription. It depends on Mg(2+) as a cofactor. Zn(2+) is required as a cofactor.

It carries out the reaction RNA(n) + a ribonucleoside 5'-triphosphate = RNA(n+1) + diphosphate. Its function is as follows. DNA-dependent RNA polymerase catalyzes the transcription of DNA into RNA using the four ribonucleoside triphosphates as substrates. This Alkaliphilus oremlandii (strain OhILAs) (Clostridium oremlandii (strain OhILAs)) protein is DNA-directed RNA polymerase subunit beta'.